The chain runs to 495 residues: BUB3-interacting and GLEBS motif-containing protein ZNF207 (495 aa).

Residues 1–92 (MGRKKKKQLK…EGIPEKDMDE (92 aa)) are microtubule-binding region. C2H2-type zinc fingers lie at residues 11-34 (PWCW…KAKH) and 35-58 (FKCH…MQVH). The span at 99 to 111 (QKTQESQKKKQQD) shows a compositional bias: basic and acidic residues. Disordered regions lie at residues 99–161 (QKTQ…PGIP), 252–292 (PPAP…SNSE), and 316–372 (VGTD…ATLT). Acidic residues predominate over residues 112-121 (DSDEYDDDES). Over residues 127 to 136 (FQPQPVQPQQ) the composition is skewed to polar residues. A compositionally biased stretch (pro residues) spans 142–161 (MAQPGLPPVPGAPGMPPGIP). Composition is skewed to low complexity over residues 283-292 (SSSTASSNSE) and 326-372 (TPAA…ATLT). A GLEBS region spans residues 376–408 (ATSKLIHPDEDISLEERRAQLPKYQRNLPRPGQ). The interval 462-495 (PYGQGPPMVPPYQGGPPRPPMGMRPPVMSQGGRY) is disordered. Residues 464-484 (GQGPPMVPPYQGGPPRPPMGM) show a composition bias toward pro residues.

Interacts (via GLEBS region) with BUB3. In terms of tissue distribution, in day-13 embryo, strongly expressed in the nervous system (brain, spinal cord and dorsal root ganglia), with strong to weak expression in other regions. Continues to be strongly expressed in the neonatal brain while expression is weak in the brain and spinal cord of adult.

The protein resides in the nucleus. The protein localises to the chromosome. It localises to the centromere. Its subcellular location is the kinetochore. It is found in the cytoplasm. The protein resides in the cytoskeleton. The protein localises to the spindle. Its function is as follows. Kinetochore- and microtubule-binding protein that plays a key role in spindle assembly. ZNF207/BuGZ is mainly composed of disordered low-complexity regions and undergoes phase transition or coacervation to form temperature-dependent liquid droplets. Coacervation promotes microtubule bundling and concentrates tubulin, promoting microtubule polymerization and assembly of spindle and spindle matrix by concentrating its building blocks. Also acts as a regulator of mitotic chromosome alignment by mediating the stability and kinetochore loading of BUB3. Mechanisms by which BUB3 is protected are unclear: according to a first report, ZNF207/BuGZ may act by blocking ubiquitination and proteasomal degradation of BUB3. According to another report, the stabilization is independent of the proteasome. The chain is BUB3-interacting and GLEBS motif-containing protein ZNF207 from Mus musculus (Mouse).